Here is a 362-residue protein sequence, read N- to C-terminus: Glutaminase-asparaginase (362 aa).

A signal peptide spans 1–25 (MKPLLHAFAPGVMALMLLLPQAAQA). In terms of domain architecture, Asparaginase/glutaminase spans 35–362 (SNVVILATGG…KELQRIFWEY (328 aa)). Residue threonine 45 is the Acyl-ester intermediate of the active site. Residues serine 92 and 125 to 126 (TD) contribute to the substrate site.

It belongs to the asparaginase 1 family. Homotetramer.

The protein resides in the periplasm. It catalyses the reaction L-glutamine + H2O = L-glutamate + NH4(+). The catalysed reaction is L-asparagine + H2O = L-aspartate + NH4(+). This Pseudomonas aeruginosa (strain ATCC 15692 / DSM 22644 / CIP 104116 / JCM 14847 / LMG 12228 / 1C / PRS 101 / PAO1) protein is Glutaminase-asparaginase (ansB).